Here is a 797-residue protein sequence, read N- to C-terminus: MPCTTYLPLLLLLFLLPPPSVQSKVIIKGNQTILSFKAIFRLGFFSTTNGSSNWYLGISYASMPTPTHVWVANRIRPVSDPDSSTLELTSTGYLIVSNLRDGVVWQTDNKQPGTDFRFSETGNLILINDDGSPVWQSFDNPTDTWLPGMNVTGLTAMTSWRSLFDPSPGFYSLRLSPSFNEFQLVYKGTTPYWSTGNWTGEAFVGVPEMTIPYIYRFHFVNPYTPTASFWYIVPPLDSVSEPRLTRFMVGANGQLKQYTWDPQTQSWNMFWLQPEDPCRVYNLCGQLGFCSSELLKPCACIRGFRPRNDAAWRSDDYSDGCRRENGDSGEKSDTFEAVGDLRYDGDVKMSRLQVSKSSCAKTCLGNSSCVGFYHKEKSNLCKILLESPNNLKNSKGNISKSIIILCSVVGSISVLGFTLLVPLILLKRSRKRKKTRKQDEDGFAVLNLKVFSFKELQSATNGFSDKVGHGGFGAVFKGTLPGSSTFVAVKRLERPGSGESEFRAEVCTIGNIQHVNLVRLRGFCSENLHRLLVYDYMPQGSLSSYLSRTSPKLLSWETRFRIALGTAKGIAYLHEGCRDCIIHCDIKPENILLDSDYNAKVSDFGLAKLLGRDFSRVLATMRGTWGYVAPEWISGLPITTKADVYSFGMTLLELIGGRRNVIVNSDTLGEKETEPEKWFFPPWAAREIIQGNVDSVVDSRLNGEYNTEEVTRMATVAIWCIQDNEEIRPAMGTVVKMLEGVVEVTVPPPPKLIQALVSGDSYRGVSGTSCSEGHGCSDLNTGLSSPGSRSSFGRPSP.

Residues 1–23 (MPCTTYLPLLLLLFLLPPPSVQS) form the signal peptide. One can recognise a Bulb-type lectin domain in the interval 24–139 (KVIIKGNQTI…DGSPVWQSFD (116 aa)). Over 24–401 (KVIIKGNQTI…KNSKGNISKS (378 aa)) the chain is Extracellular. N-linked (GlcNAc...) asparagine glycosylation is found at N30, N49, N150, and N197. The EGF-like; atypical domain maps to 274–310 (PEDPCRVYNLCGQLGFCSSELLKPCACIRGFRPRNDA). Intrachain disulfides connect C278–C290, C284–C298, C359–C381, and C363–C369. The PAN domain occupies 321–407 (CRRENGDSGE…ISKSIIILCS (87 aa)). N-linked (GlcNAc...) asparagine glycosylation is found at N366 and N397. The chain crosses the membrane as a helical span at residues 402 to 422 (IIILCSVVGSISVLGFTLLVP). At 423-797 (LILLKRSRKR…SRSSFGRPSP (375 aa)) the chain is on the cytoplasmic side. A Protein kinase domain is found at 461-742 (NGFSDKVGHG…TVVKMLEGVV (282 aa)). ATP contacts are provided by residues 467-475 (VGHGGFGAV) and K490. A caM-binding region spans residues 550–566 (SPKLLSWETRFRIALGT). D585 acts as the Proton acceptor in catalysis. Positions 767–797 (GTSCSEGHGCSDLNTGLSSPGSRSSFGRPSP) are disordered. Residues 784–797 (SSPGSRSSFGRPSP) are compositionally biased toward low complexity.

The protein belongs to the protein kinase superfamily. Ser/Thr protein kinase family. In terms of processing, autophosphorylated. In terms of tissue distribution, expressed in the shoot apex and roots, specifically in lateral roots and at the root-hypocotyl transition zone.

It localises to the cell membrane. The catalysed reaction is L-seryl-[protein] + ATP = O-phospho-L-seryl-[protein] + ADP + H(+). It catalyses the reaction L-threonyl-[protein] + ATP = O-phospho-L-threonyl-[protein] + ADP + H(+). Functionally, serine/threonine-protein kinase. This Arabidopsis thaliana (Mouse-ear cress) protein is G-type lectin S-receptor-like serine/threonine-protein kinase SD2-2 (SD22).